The primary structure comprises 263 residues: Probable ribosomal RNA small subunit methyltransferase A (263 aa).

S-adenosyl-L-methionine is bound by residues Leu-12, Gly-37, Glu-58, Asp-83, and Asn-100.

Belongs to the class I-like SAM-binding methyltransferase superfamily. rRNA adenine N(6)-methyltransferase family. RsmA subfamily.

The protein resides in the cytoplasm. Its function is as follows. Specifically dimethylates two adjacent adenosines in the loop of a conserved hairpin near the 3'-end of 16S rRNA in the 30S particle. May play a critical role in biogenesis of 30S subunits. This is Probable ribosomal RNA small subunit methyltransferase A from Methanococcus maripaludis (strain C5 / ATCC BAA-1333).